A 177-amino-acid chain; its full sequence is Nuclear export protein (177 aa).

2 consecutive short sequence motifs (nuclear export signal) follow at residues 91–100 and 117–127; these read LWLPMKSLSL and MKHQILTRLKL.

In terms of assembly, binds M1 protein. May interact with human nucleoporins and exportin XPO1/CRM1.

It is found in the virion. It localises to the host nucleus. In terms of biological role, mediates the nuclear export of encapsidated genomic RNAs (ribonucleoproteins, RNPs). Acts as an adapter between viral RNPs complexes and the nuclear export machinery of the cell. Possesses no intrinsic RNA-binding activity, but includes a C-terminal M1-binding domain. This domain is believed to allow recognition of RNPs to which the M1 protein is bound. Because the M1 protein is not available in large quantities until the later stages of infection, such an indirect recognition mechanism probably ensures that genomic RNPs are not exported from the nucleus before sufficient quantities of viral mRNA and progeny genomic RNA have been synthesized. Furthermore, the RNPs enters the cytoplasm only when they have associated with the M1 protein that is necessary to guide them to the plasma membrane. May down-regulate viral RNA synthesis when overproduced. This is Nuclear export protein (NS) from Influenza C virus (strain C/Great lakes/1167/1954).